Consider the following 414-residue polypeptide: Serine hydroxymethyltransferase (414 aa).

Residues Leu-116 and Gly-120–Leu-122 each bind (6S)-5,6,7,8-tetrahydrofolate. Lys-224 is modified (N6-(pyridoxal phosphate)lysine). (6S)-5,6,7,8-tetrahydrofolate contacts are provided by residues Glu-240 and Ser-348–Phe-350.

Belongs to the SHMT family. Homodimer. Pyridoxal 5'-phosphate is required as a cofactor.

Its subcellular location is the cytoplasm. The enzyme catalyses (6R)-5,10-methylene-5,6,7,8-tetrahydrofolate + glycine + H2O = (6S)-5,6,7,8-tetrahydrofolate + L-serine. The protein operates within one-carbon metabolism; tetrahydrofolate interconversion. Its pathway is amino-acid biosynthesis; glycine biosynthesis; glycine from L-serine: step 1/1. Its function is as follows. Catalyzes the reversible interconversion of serine and glycine with tetrahydrofolate (THF) serving as the one-carbon carrier. This reaction serves as the major source of one-carbon groups required for the biosynthesis of purines, thymidylate, methionine, and other important biomolecules. Also exhibits THF-independent aldolase activity toward beta-hydroxyamino acids, producing glycine and aldehydes, via a retro-aldol mechanism. This chain is Serine hydroxymethyltransferase, found in Campylobacter jejuni subsp. jejuni serotype O:23/36 (strain 81-176).